The primary structure comprises 276 residues: Pantothenate synthetase (276 aa).

Residue 27-34 (MGALHKGH) participates in ATP binding. Histidine 34 functions as the Proton donor in the catalytic mechanism. Position 58 (glutamine 58) interacts with (R)-pantoate. Glutamine 58 provides a ligand contact to beta-alanine. 147–150 (GKKD) contributes to the ATP binding site. Residue glutamine 153 participates in (R)-pantoate binding. ATP is bound by residues valine 176 and 184-187 (LSSR).

This sequence belongs to the pantothenate synthetase family. In terms of assembly, homodimer.

It localises to the cytoplasm. The catalysed reaction is (R)-pantoate + beta-alanine + ATP = (R)-pantothenate + AMP + diphosphate + H(+). It participates in cofactor biosynthesis; (R)-pantothenate biosynthesis; (R)-pantothenate from (R)-pantoate and beta-alanine: step 1/1. Its function is as follows. Catalyzes the condensation of pantoate with beta-alanine in an ATP-dependent reaction via a pantoyl-adenylate intermediate. The sequence is that of Pantothenate synthetase from Helicobacter pylori (strain ATCC 700392 / 26695) (Campylobacter pylori).